Here is a 245-residue protein sequence, read N- to C-terminus: tRNA (guanine-N(1)-)-methyltransferase (245 aa).

S-adenosyl-L-methionine-binding positions include G111 and 131–136; that span reads IGDYVL.

It belongs to the RNA methyltransferase TrmD family. In terms of assembly, homodimer.

It localises to the cytoplasm. It carries out the reaction guanosine(37) in tRNA + S-adenosyl-L-methionine = N(1)-methylguanosine(37) in tRNA + S-adenosyl-L-homocysteine + H(+). In terms of biological role, specifically methylates guanosine-37 in various tRNAs. This chain is tRNA (guanine-N(1)-)-methyltransferase, found in Staphylococcus haemolyticus (strain JCSC1435).